A 339-amino-acid chain; its full sequence is Ribonucleoside-diphosphate reductase subunit beta (339 aa).

The Fe cation site is built by Asp87 and His121. Residue Tyr125 is part of the active site. Position 215 (His215) interacts with Fe cation.

Belongs to the ribonucleoside diphosphate reductase small chain family. In terms of assembly, tetramer of two alpha and two beta subunits. The cofactor is Fe cation.

It carries out the reaction a 2'-deoxyribonucleoside 5'-diphosphate + [thioredoxin]-disulfide + H2O = a ribonucleoside 5'-diphosphate + [thioredoxin]-dithiol. In terms of biological role, provides the precursors necessary for DNA synthesis. Catalyzes the biosynthesis of deoxyribonucleotides from the corresponding ribonucleotides. The protein is Ribonucleoside-diphosphate reductase subunit beta (nrdF) of Mycoplasma pneumoniae (strain ATCC 29342 / M129 / Subtype 1) (Mycoplasmoides pneumoniae).